The chain runs to 133 residues: Holo-[acyl-carrier-protein] synthase (133 aa).

Asp-8 and Glu-58 together coordinate Mg(2+).

Belongs to the P-Pant transferase superfamily. AcpS family. Mg(2+) serves as cofactor.

It is found in the cytoplasm. It catalyses the reaction apo-[ACP] + CoA = holo-[ACP] + adenosine 3',5'-bisphosphate + H(+). Its function is as follows. Transfers the 4'-phosphopantetheine moiety from coenzyme A to a Ser of acyl-carrier-protein. This is Holo-[acyl-carrier-protein] synthase from Erythrobacter litoralis (strain HTCC2594).